Consider the following 81-residue polypeptide: Photosystem I iron-sulfur center (81 aa).

2 consecutive 4Fe-4S ferredoxin-type domains span residues 2-31 (SHSV…MIPW) and 39-68 (IASA…VRVY). 8 residues coordinate [4Fe-4S] cluster: C11, C14, C17, C21, C48, C51, C54, and C58.

As to quaternary structure, the eukaryotic PSI reaction center is composed of at least 11 subunits. The cofactor is [4Fe-4S] cluster.

It is found in the plastid thylakoid membrane. It catalyses the reaction reduced [plastocyanin] + hnu + oxidized [2Fe-2S]-[ferredoxin] = oxidized [plastocyanin] + reduced [2Fe-2S]-[ferredoxin]. Functionally, apoprotein for the two 4Fe-4S centers FA and FB of photosystem I (PSI); essential for photochemical activity. FB is the terminal electron acceptor of PSI, donating electrons to ferredoxin. The C-terminus interacts with PsaA/B/D and helps assemble the protein into the PSI complex. Required for binding of PsaD and PsaE to PSI. PSI is a plastocyanin-ferredoxin oxidoreductase, converting photonic excitation into a charge separation, which transfers an electron from the donor P700 chlorophyll pair to the spectroscopically characterized acceptors A0, A1, FX, FA and FB in turn. The protein is Photosystem I iron-sulfur center of Cuscuta obtusiflora (Peruvian dodder).